The primary structure comprises 214 residues: Adenylate kinase (214 aa).

Position 10–15 (10–15) interacts with ATP; sequence GAGKGT. The NMP stretch occupies residues 30-59; the sequence is STGDMLRAAVKAQTPVGLKAKAVMDRGELV. AMP-binding positions include T31, R36, 57–59, 85–88, and Q92; these read ELV and GYPR. Residues 126 to 163 are LID; that stretch reads GRFTCAKCGTGYHDRHKQPAREGVCDVCGSTEFKRRPD. Residue R127 participates in ATP binding. The Zn(2+) site is built by C130, C133, C150, and C153. The AMP site is built by R160 and R172. G200 contributes to the ATP binding site.

Belongs to the adenylate kinase family. As to quaternary structure, monomer.

Its subcellular location is the cytoplasm. The catalysed reaction is AMP + ATP = 2 ADP. It functions in the pathway purine metabolism; AMP biosynthesis via salvage pathway; AMP from ADP: step 1/1. In terms of biological role, catalyzes the reversible transfer of the terminal phosphate group between ATP and AMP. Plays an important role in cellular energy homeostasis and in adenine nucleotide metabolism. The polypeptide is Adenylate kinase (Erythrobacter litoralis (strain HTCC2594)).